The chain runs to 210 residues: LexA repressor (210 aa).

Positions 30–50 (RVEIAREIGFKSPNAAEEHLK) form a DNA-binding region, H-T-H motif. Catalysis depends on for autocatalytic cleavage activity residues Ser127 and Lys164.

The protein belongs to the peptidase S24 family. As to quaternary structure, homodimer.

The enzyme catalyses Hydrolysis of Ala-|-Gly bond in repressor LexA.. Its function is as follows. Represses a number of genes involved in the response to DNA damage (SOS response), including recA and lexA. In the presence of single-stranded DNA, RecA interacts with LexA causing an autocatalytic cleavage which disrupts the DNA-binding part of LexA, leading to derepression of the SOS regulon and eventually DNA repair. The protein is LexA repressor of Actinobacillus pleuropneumoniae serotype 7 (strain AP76).